The following is a 179-amino-acid chain: MTYLSQLEALLFVAGEEGLSLRQLVSLLELTPTALQQQLDKLSQKYKEDKESGLCLIESSRTYKLVTKECLAPLLKDYAKAPINQTLSRASLEVLSIVAYKQPITRIEIDEIRGVNSSGALSKLVAFGLVQEAGKKEVIGRPNLYATTDYFLDYMGINHLEELVDISSIAVEEQETTLF.

It belongs to the ScpB family. As to quaternary structure, homodimer. Homodimerization may be required to stabilize the binding of ScpA to the Smc head domains. Component of a cohesin-like complex composed of ScpA, ScpB and the Smc homodimer, in which ScpA and ScpB bind to the head domain of Smc. The presence of the three proteins is required for the association of the complex with DNA.

Its subcellular location is the cytoplasm. Functionally, participates in chromosomal partition during cell division. May act via the formation of a condensin-like complex containing Smc and ScpA that pull DNA away from mid-cell into both cell halves. This chain is Segregation and condensation protein B, found in Streptococcus equi subsp. zooepidemicus (strain H70).